The primary structure comprises 618 residues: Protein polyglycylase TTLL10 (618 aa).

The interval 1-76 is disordered; it reads MGSSQEEGLP…GLLLGDGKPS (76 aa). Residues 57 to 74 show a composition bias toward low complexity; sequence ATGPPAALLEGLLLGDGK. One can recognise a TTL domain in the interval 82–479; sequence PGPFFYIGGN…TFQKSLRGQK (398 aa). ATP is bound by residues K240, 246–247, 289–292, 302–304, and 345–346; these read QG, QRYI, KFD, and TN. Position 246 (Q246) interacts with a protein. D425, E438, and N440 together coordinate Mg(2+). Positions 503 to 618 are disordered; the sequence is LGGSCSLRRR…PATLPAFRDL (116 aa). Residues 539 to 557 are compositionally biased toward pro residues; it reads PVPPPLAPQRPQLPGPSPD. The segment covering 585-594 has biased composition (basic and acidic residues); it reads AKEEREEPEN.

Mg(2+) is required as a cofactor.

The protein localises to the cytoplasm. Its subcellular location is the cytoskeleton. The protein resides in the cell projection. It localises to the cilium. It is found in the cilium axoneme. The catalysed reaction is (glycyl)(n)-glycyl-L-glutamyl-[protein] + glycine + ATP = (glycyl)(n+1)-glycyl-L-glutamyl-[protein] + ADP + phosphate + H(+). Polyglycylase which modifies both tubulin and non-tubulin proteins, generating polyglycine side chains of variable lengths on the gamma-carboxyl groups of specific glutamate residues of target proteins. Involved in the elongation step rather than the initiation step of the polyglycylation reaction. Polyglycylates alpha-tubulin and beta-tubulin. Polyglycylates non-tubulin proteins such as nucleosome assembly protein NAP1. This chain is Protein polyglycylase TTLL10 (TTLL10), found in Macaca fascicularis (Crab-eating macaque).